The primary structure comprises 437 residues: GTPase Der (437 aa).

2 consecutive EngA-type G domains span residues 4–168 (NIVA…PEKP) and 178–353 (PRFA…ENRK). Residues 10–17 (GRPNVGKS), 57–61 (DTGGY), 120–123 (NKVD), 184–191 (GRPNAGKS), 231–235 (DTAGI), and 296–299 (NKWD) contribute to the GTP site. One can recognise a KH-like domain in the interval 354 to 437 (QRISTSKFNE…VPIDIYIREK (84 aa)).

It belongs to the TRAFAC class TrmE-Era-EngA-EngB-Septin-like GTPase superfamily. EngA (Der) GTPase family. Associates with the 50S ribosomal subunit.

Its function is as follows. GTPase that plays an essential role in the late steps of ribosome biogenesis. This is GTPase Der from Flavobacterium johnsoniae (strain ATCC 17061 / DSM 2064 / JCM 8514 / BCRC 14874 / CCUG 350202 / NBRC 14942 / NCIMB 11054 / UW101) (Cytophaga johnsonae).